The primary structure comprises 245 residues: Ribonuclease PH (245 aa).

Residues Arg86 and 124–126 each bind phosphate; that span reads GTR.

This sequence belongs to the RNase PH family. Homohexameric ring arranged as a trimer of dimers. It has been suggested that the active form is the dimer which binds tRNA and that the hexameric form protects the substrate recognition loop (approximately residues 65-82) from proteolysis.

It catalyses the reaction tRNA(n+1) + phosphate = tRNA(n) + a ribonucleoside 5'-diphosphate. Phosphorolytic 3'-5' exoribonuclease that plays an important role in tRNA 3'-end maturation. Removes nucleotide residues following the 3'-CCA terminus of tRNAs; can also add nucleotides to the ends of RNA molecules by using nucleoside diphosphates as substrates, but this may not be physiologically important. Probably plays a role in initiation of 16S rRNA degradation (leading to ribosome degradation) during starvation. Plays a role in the secondary pathway of 23S rRNA 3' end maturation. The polypeptide is Ribonuclease PH (Bacillus subtilis (strain 168)).